The chain runs to 766 residues: Protein transport protein Sec23B (766 aa).

At alanine 2 the chain carries N-acetylalanine. Residues cysteine 61, cysteine 66, cysteine 85, and cysteine 88 each contribute to the Zn(2+) site. An N6-acetyllysine modification is found at lysine 564. One copy of the Gelsolin-like repeat lies at proline 633 to leucine 719.

This sequence belongs to the SEC23/SEC24 family. SEC23 subfamily. In terms of assembly, COPII is composed of at least five proteins: the Sec23/24 complex, the Sec13/31 complex and Sar1. Interacts with SAR1A.

The protein localises to the cytoplasmic vesicle. It localises to the COPII-coated vesicle membrane. Its subcellular location is the endoplasmic reticulum membrane. The protein resides in the cytoplasm. It is found in the cytosol. In terms of biological role, component of the coat protein complex II (COPII) which promotes the formation of transport vesicles from the endoplasmic reticulum (ER). The coat has two main functions, the physical deformation of the endoplasmic reticulum membrane into vesicles and the selection of cargo molecules for their transport to the Golgi complex. In Pongo abelii (Sumatran orangutan), this protein is Protein transport protein Sec23B.